Here is a 403-residue protein sequence, read N- to C-terminus: Large ribosomal subunit protein uL3 (403 aa).

A disordered region spans residues 1 to 37; it reads MSHRKFSAPRHGSLGFLPRKRSSRHRGKVKSFPKDDP. Ser13 is subject to Phosphoserine. Over residues 18–31 the composition is skewed to basic residues; sequence PRKRSSRHRGKVKS. A Glycyl lysine isopeptide (Lys-Gly) (interchain with G-Cter in SUMO2) cross-link involves residue Lys39. An N6-acetyllysine modification is found at Lys136. Residues Lys224 and Lys226 each participate in a glycyl lysine isopeptide (Lys-Gly) (interchain with G-Cter in SUMO2) cross-link. His245 carries the post-translational modification Tele-methylhistidine. N6-acetyllysine; alternate is present on residues Lys286 and Lys294. Lys286 is covalently cross-linked (Glycyl lysine isopeptide (Lys-Gly) (interchain with G-Cter in SUMO2); alternate). A Glycyl lysine isopeptide (Lys-Gly) (interchain with G-Cter in SUMO1); alternate cross-link involves residue Lys294. Residue Ser304 is modified to Phosphoserine. An N6-acetyllysine; alternate modification is found at Lys366. A Glycyl lysine isopeptide (Lys-Gly) (interchain with G-Cter in SUMO2); alternate cross-link involves residue Lys366. Lys373 is modified (N6-acetyllysine). Glycyl lysine isopeptide (Lys-Gly) (interchain with G-Cter in SUMO2) cross-links involve residues Lys386, Lys393, and Lys399.

Belongs to the universal ribosomal protein uL3 family. Component of the large ribosomal subunit. Interacts with DHX33. Post-translationally, constitutively monomethylated at His-245 by METTL18. Methylation at His-245 regulates translation elongation by slowing ribosome traversal on tyrosine codons: slower elongation provides enough time for proper folding of synthesized proteins and prevents cellular aggregation of tyrosine-rich proteins. It is not required for incorporation of RPL3 into ribosomes.

It localises to the nucleus. Its subcellular location is the nucleolus. The protein resides in the cytoplasm. Functionally, component of the large ribosomal subunit. The ribosome is a large ribonucleoprotein complex responsible for the synthesis of proteins in the cell. This is Large ribosomal subunit protein uL3 (RPL3) from Oryctolagus cuniculus (Rabbit).